A 50-amino-acid polypeptide reads, in one-letter code: Gene 38 protein (50 aa).

This Mycobacterium (Mycobacteriophage D29) protein is Gene 38 protein (38).